A 156-amino-acid chain; its full sequence is 3-dehydroquinate dehydratase (156 aa).

The active-site Proton acceptor is Y22. 3 residues coordinate substrate: N73, H79, and D86. Catalysis depends on H99, which acts as the Proton donor. Substrate-binding positions include 100-101 and R110; that span reads LS.

Belongs to the type-II 3-dehydroquinase family. Homododecamer.

The catalysed reaction is 3-dehydroquinate = 3-dehydroshikimate + H2O. It participates in metabolic intermediate biosynthesis; chorismate biosynthesis; chorismate from D-erythrose 4-phosphate and phosphoenolpyruvate: step 3/7. In terms of biological role, catalyzes a trans-dehydration via an enolate intermediate. The sequence is that of 3-dehydroquinate dehydratase from Nitratiruptor sp. (strain SB155-2).